Consider the following 185-residue polypeptide: Ribosome-recycling factor (185 aa).

Belongs to the RRF family.

It localises to the cytoplasm. Functionally, responsible for the release of ribosomes from messenger RNA at the termination of protein biosynthesis. May increase the efficiency of translation by recycling ribosomes from one round of translation to another. The polypeptide is Ribosome-recycling factor (Thermosipho melanesiensis (strain DSM 12029 / CIP 104789 / BI429)).